The primary structure comprises 348 residues: Centromere protein N-B (348 aa).

It belongs to the CENP-N/CHL4 family.

The protein resides in the nucleus. It is found in the chromosome. The protein localises to the centromere. Probable component of a centromeric complex involved in assembly of kinetochore proteins, mitotic progression and chromosome segregation. The polypeptide is Centromere protein N-B (cenpn-b) (Xenopus laevis (African clawed frog)).